Consider the following 201-residue polypeptide: Adenylyl-sulfate kinase (201 aa).

35–42 (GLSGSGKS) contributes to the ATP binding site. The Phosphoserine intermediate role is filled by Ser-109.

This sequence belongs to the APS kinase family.

The catalysed reaction is adenosine 5'-phosphosulfate + ATP = 3'-phosphoadenylyl sulfate + ADP + H(+). Its pathway is sulfur metabolism; hydrogen sulfide biosynthesis; sulfite from sulfate: step 2/3. Its function is as follows. Catalyzes the synthesis of activated sulfate. This chain is Adenylyl-sulfate kinase, found in Erwinia tasmaniensis (strain DSM 17950 / CFBP 7177 / CIP 109463 / NCPPB 4357 / Et1/99).